The primary structure comprises 659 residues: 1,4-alpha-glucan branching enzyme GlgB 2 (659 aa).

The disordered stretch occupies residues 1-26 (MRNYKELKHEKNGNVTEKIGENKGKS). D337 functions as the Nucleophile in the catalytic mechanism. Residue E390 is the Proton donor of the active site.

It belongs to the glycosyl hydrolase 13 family. GlgB subfamily. As to quaternary structure, monomer.

The enzyme catalyses Transfers a segment of a (1-&gt;4)-alpha-D-glucan chain to a primary hydroxy group in a similar glucan chain.. It functions in the pathway glycan biosynthesis; glycogen biosynthesis. Functionally, catalyzes the formation of the alpha-1,6-glucosidic linkages in glycogen by scission of a 1,4-alpha-linked oligosaccharide from growing alpha-1,4-glucan chains and the subsequent attachment of the oligosaccharide to the alpha-1,6 position. The protein is 1,4-alpha-glucan branching enzyme GlgB 2 of Clostridium perfringens (strain SM101 / Type A).